Consider the following 681-residue polypeptide: DNA ligase (681 aa).

NAD(+) contacts are provided by residues 45–49, 94–95, and E120; these read DFDFD and SL. K122 serves as the catalytic N6-AMP-lysine intermediate. The NAD(+) site is built by R143, E177, K289, and K313. Zn(2+) is bound by residues C403, C406, C421, and C426. The 89-residue stretch at 593–681 folds into the BRCT domain; it reads ADQQPFAGQS…SLKIDFKNLI (89 aa).

This sequence belongs to the NAD-dependent DNA ligase family. LigA subfamily. Requires Mg(2+) as cofactor. Mn(2+) is required as a cofactor.

The catalysed reaction is NAD(+) + (deoxyribonucleotide)n-3'-hydroxyl + 5'-phospho-(deoxyribonucleotide)m = (deoxyribonucleotide)n+m + AMP + beta-nicotinamide D-nucleotide.. In terms of biological role, DNA ligase that catalyzes the formation of phosphodiester linkages between 5'-phosphoryl and 3'-hydroxyl groups in double-stranded DNA using NAD as a coenzyme and as the energy source for the reaction. It is essential for DNA replication and repair of damaged DNA. In Leptospira interrogans serogroup Icterohaemorrhagiae serovar Lai (strain 56601), this protein is DNA ligase.